A 256-amino-acid polypeptide reads, in one-letter code: Vesicle-associated protein 1-1 (256 aa).

At Met-1 the chain carries N-acetylmethionine. The Cytoplasmic segment spans residues 1 to 232; that stretch reads MSNIDLIGMS…RRESKKSQSG (232 aa). Residue Ser-2 is modified to N-acetylserine; in Vesicle-associated protein 1-1, N-terminally processed. Residues 22-142 form the MSP domain; the sequence is LLTVEPLDLQ…EETKLRVTYV (121 aa). The tract at residues 142–169 is disordered; the sequence is VAPPRPPSPVHEGSEEGSSPRASVSDNG. Ser-149 is modified (phosphoserine). A compositionally biased stretch (polar residues) spans 157–169; the sequence is EGSSPRASVSDNG. Positions 187–232 form a coiled coil; that stretch reads HQENTSEARALITKLTEEKQSAIQLNNRLQRELDQLRRESKKSQSG. Residues 233-253 traverse the membrane as a helical; Anchor for type IV membrane protein segment; it reads GIPFMYVLLVGLIGLILGYIM.

Belongs to the VAMP-associated protein (VAP) (TC 9.B.17) family. As to quaternary structure, homodimer or homooligomer. Interacts with the cowpea mosaic virus (CPMV) NTP-binding protein (NTB). Interacts with NET3C.

The protein resides in the endoplasmic reticulum membrane. The protein localises to the protein storage vacuole membrane. Functionally, part of a membrane-cytoskeletal adapter complex that forms a bridge between the endoplasmic reticulum and the plasma membrane. Associates with microtubules. The protein is Vesicle-associated protein 1-1 (PVA11) of Arabidopsis thaliana (Mouse-ear cress).